The primary structure comprises 97 residues: Putative pterin-4-alpha-carbinolamine dehydratase (97 aa).

Belongs to the pterin-4-alpha-carbinolamine dehydratase family.

It carries out the reaction (4aS,6R)-4a-hydroxy-L-erythro-5,6,7,8-tetrahydrobiopterin = (6R)-L-erythro-6,7-dihydrobiopterin + H2O. The chain is Putative pterin-4-alpha-carbinolamine dehydratase from Opitutus terrae (strain DSM 11246 / JCM 15787 / PB90-1).